We begin with the raw amino-acid sequence, 342 residues long: Cytoplasmic tRNA 2-thiolation protein 1 (342 aa).

It belongs to the TtcA family. CTU1/NCS6/ATPBD3 subfamily.

The protein resides in the cytoplasm. Its pathway is tRNA modification; 5-methoxycarbonylmethyl-2-thiouridine-tRNA biosynthesis. Functionally, plays a central role in 2-thiolation of mcm(5)S(2)U at tRNA wobble positions of tRNA(Lys), tRNA(Glu) and tRNA(Gln). Directly binds tRNAs and probably acts by catalyzing adenylation of tRNAs, an intermediate required for 2-thiolation. It is unclear whether it acts as a sulfurtransferase that transfers sulfur from thiocarboxylated URM1 onto the uridine of tRNAs at wobble position. This Anopheles gambiae (African malaria mosquito) protein is Cytoplasmic tRNA 2-thiolation protein 1.